The primary structure comprises 500 residues: Xylan O-acetyltransferase 2 (500 aa).

Residues 1–25 (MGLPGRRNPLLSARRAAASLRRSRR) lie on the Cytoplasmic side of the membrane. A helical; Signal-anchor for type II membrane protein transmembrane segment spans residues 26-43 (LPVYVAAVFFVASVLLMF). Over 44-500 (RDEILYLTTA…RPPAAAGHVA (457 aa)) the chain is Lumenal. The disordered stretch occupies residues 84 to 116 (PVLLGHGGKPEKHHSVTERHRPKVSAKRRPNKK). The segment covering 91 to 102 (GKPEKHHSVTER) has biased composition (basic and acidic residues). Basic residues predominate over residues 103–116 (HRPKVSAKRRPNKK). 4 cysteine pairs are disulfide-bonded: cysteine 143–cysteine 194, cysteine 165–cysteine 231, cysteine 174–cysteine 472, and cysteine 388–cysteine 468. Residues asparagine 144 and asparagine 154 are each glycosylated (N-linked (GlcNAc...) asparagine). The short motif at 218–220 (GDS) is the GDS motif element. Residue serine 220 is the Nucleophile of the active site. N-linked (GlcNAc...) asparagine glycans are attached at residues asparagine 260 and asparagine 416. Aspartate 467 (proton donor) is an active-site residue. A DXXH motif motif is present at residues 467 to 470 (DCIH). Histidine 470 (proton acceptor) is an active-site residue.

This sequence belongs to the PC-esterase family. TBL subfamily. As to expression, expressed at low levels in roots and leaves.

Its subcellular location is the golgi apparatus membrane. Xylan acetyltransferase required for 2-O- and 3-O-monoacetylation of xylosyl residues in xylan. Catalyzes the 2-O-acetylation of xylan, followed by nonenzymatic acetyl migration to the O-3 position, resulting in products that are monoacetylated at both O-2 and O-3 positions. This Oryza sativa subsp. japonica (Rice) protein is Xylan O-acetyltransferase 2.